We begin with the raw amino-acid sequence, 156 residues long: ATP synthase subunit b (156 aa).

The helical transmembrane segment at 7-27 threads the bilayer; sequence LFAQMIVFFVLWWVVARFVWP.

This sequence belongs to the ATPase B chain family. In terms of assembly, F-type ATPases have 2 components, F(1) - the catalytic core - and F(0) - the membrane proton channel. F(1) has five subunits: alpha(3), beta(3), gamma(1), delta(1), epsilon(1). F(0) has three main subunits: a(1), b(2) and c(10-14). The alpha and beta chains form an alternating ring which encloses part of the gamma chain. F(1) is attached to F(0) by a central stalk formed by the gamma and epsilon chains, while a peripheral stalk is formed by the delta and b chains.

The protein resides in the cell membrane. Its function is as follows. F(1)F(0) ATP synthase produces ATP from ADP in the presence of a proton or sodium gradient. F-type ATPases consist of two structural domains, F(1) containing the extramembraneous catalytic core and F(0) containing the membrane proton channel, linked together by a central stalk and a peripheral stalk. During catalysis, ATP synthesis in the catalytic domain of F(1) is coupled via a rotary mechanism of the central stalk subunits to proton translocation. Component of the F(0) channel, it forms part of the peripheral stalk, linking F(1) to F(0). In Polynucleobacter asymbioticus (strain DSM 18221 / CIP 109841 / QLW-P1DMWA-1) (Polynucleobacter necessarius subsp. asymbioticus), this protein is ATP synthase subunit b.